A 775-amino-acid polypeptide reads, in one-letter code: DENN domain-containing protein 1B (775 aa).

The 130-residue stretch at 14–143 (DLVLKVKCHA…YNHPVPKANT (130 aa)) folds into the uDENN domain. In terms of domain architecture, cDENN spans 180–316 (GLPTIPESRN…VVSALKNKLK (137 aa)). Residues 318–395 (QSTATGDGVA…DGRLAKLNAG (78 aa)) form the dDENN domain. The FXDXF motif motif lies at 398–402 (FSDVF). Residue Tyr-520 is modified to Phosphotyrosine. Residues Ser-535, Ser-536, Ser-549, and Ser-552 each carry the phosphoserine modification. The short motif at 566–575 (DLLGEILDTL) is the Clathrin box element. Disordered stretches follow at residues 635-654 (DSAL…VSSS) and 671-706 (HLGA…KRET). A compositionally biased stretch (basic residues) spans 639 to 651 (HGKHLPPSPRKRV). A phosphoserine mark is found at Ser-652 and Ser-653. Positions 695–706 (QTDKGKTEKRET) are enriched in basic and acidic residues.

In terms of assembly, interacts with RAB35. Interacts with clathrin heavy chain/CLTC. Interacts with components of the adapter protein complex 2 (AP-2) AP2A2 and AP2B1. Interacts with CD3E. Post-translationally, phosphorylated on serine and/or threonine, possibly regulating the guanine nucleotide exchange factor (GEF) activity. Highly expressed in dendritic and natural killer cells and at lower levels in other myeloid lineage cells and in pituitary. Significantly up-regulated in effector memory T-cells as compared with naive T-cells.

It localises to the cytoplasm. Its subcellular location is the cytosol. The protein localises to the cytoplasmic vesicle. The protein resides in the clathrin-coated vesicle. Its function is as follows. Guanine nucleotide exchange factor (GEF) for RAB35 that acts as a regulator of T-cell receptor (TCR) internalization in TH2 cells. Acts by promoting the exchange of GDP to GTP, converting inactive GDP-bound RAB35 into its active GTP-bound form. Plays a role in clathrin-mediated endocytosis. Controls cytokine production in TH2 lymphocytes by controlling the rate of TCR internalization and routing to endosomes: acts by mediating clathrin-mediated endocytosis of TCR via its interaction with the adapter protein complex 2 (AP-2) and GEF activity. Dysregulation leads to impaired TCR down-modulation and recycling, affecting cytokine production in TH2 cells. The sequence is that of DENN domain-containing protein 1B from Homo sapiens (Human).